The sequence spans 293 residues: TBC1 domain family member 7 (293 aa).

The 182-residue stretch at 50–231 (PLPSMYRILV…RVWDKLVSGS (182 aa)) folds into the Rab-GAP TBC domain.

As to quaternary structure, component of the TSC-TBC complex (also named Rhebulator complex), composed of 2 molecules of TSC1, 2 molecules of TSC2 and 1 molecule of TBC1D7.

It localises to the lysosome membrane. The protein resides in the cytoplasmic vesicle. It is found in the cytoplasm. The protein localises to the cytosol. In terms of biological role, non-catalytic component of the TSC-TBC complex, a multiprotein complex that acts as a negative regulator of the canonical mTORC1 complex, an evolutionarily conserved central nutrient sensor that stimulates anabolic reactions and macromolecule biosynthesis to promote cellular biomass generation and growth. The TSC-TBC complex acts as a GTPase-activating protein (GAP) for the small GTPase RHEB, a direct activator of the protein kinase activity of mTORC1. In absence of nutrients, the TSC-TBC complex inhibits mTORC1, thereby preventing phosphorylation of ribosomal protein S6 kinase (RPS6KB1 and RPS6KB2) and EIF4EBP1 (4E-BP1) by the mTORC1 signaling. The TSC-TBC complex is inactivated in response to nutrients, relieving inhibition of mTORC1. This is TBC1 domain family member 7 (tbc1d7) from Xenopus tropicalis (Western clawed frog).